The primary structure comprises 530 residues: Autoinducer-2 kinase (530 aa).

This sequence belongs to the FGGY kinase family.

The protein resides in the cytoplasm. The catalysed reaction is (S)-4,5-dihydroxypentane-2,3-dione + ATP = (2S)-2-hydroxy-3,4-dioxopentyl phosphate + ADP + H(+). Its function is as follows. Catalyzes the phosphorylation of autoinducer-2 (AI-2) to phospho-AI-2, which subsequently inactivates the transcriptional regulator LsrR and leads to the transcription of the lsr operon. Phosphorylates the ring-open form of (S)-4,5-dihydroxypentane-2,3-dione (DPD), which is the precursor to all AI-2 signaling molecules, at the C5 position. The sequence is that of Autoinducer-2 kinase from Yersinia pseudotuberculosis serotype O:1b (strain IP 31758).